A 157-amino-acid chain; its full sequence is Crossover junction endodeoxyribonuclease RuvC (157 aa).

Active-site residues include Asp7, Glu66, and Asp139. 3 residues coordinate Mg(2+): Asp7, Glu66, and Asp139.

Belongs to the RuvC family. Homodimer which binds Holliday junction (HJ) DNA. The HJ becomes 2-fold symmetrical on binding to RuvC with unstacked arms; it has a different conformation from HJ DNA in complex with RuvA. In the full resolvosome a probable DNA-RuvA(4)-RuvB(12)-RuvC(2) complex forms which resolves the HJ. The cofactor is Mg(2+).

The protein resides in the cytoplasm. It catalyses the reaction Endonucleolytic cleavage at a junction such as a reciprocal single-stranded crossover between two homologous DNA duplexes (Holliday junction).. Its function is as follows. The RuvA-RuvB-RuvC complex processes Holliday junction (HJ) DNA during genetic recombination and DNA repair. Endonuclease that resolves HJ intermediates. Cleaves cruciform DNA by making single-stranded nicks across the HJ at symmetrical positions within the homologous arms, yielding a 5'-phosphate and a 3'-hydroxyl group; requires a central core of homology in the junction. The consensus cleavage sequence is 5'-(A/T)TT(C/G)-3'. Cleavage occurs on the 3'-side of the TT dinucleotide at the point of strand exchange. HJ branch migration catalyzed by RuvA-RuvB allows RuvC to scan DNA until it finds its consensus sequence, where it cleaves and resolves the cruciform DNA. The chain is Crossover junction endodeoxyribonuclease RuvC from Helicobacter pylori (strain P12).